An 854-amino-acid chain; its full sequence is MPGGGPQGAPAAAGGGGVSHRAGSRDCLPPAACFRRRRLARRPGYMRSSTGPGIGFLSPAVGTLFRFPGGVSGEESHHSESRARQCGLDSRGLLVRSPVSKSAAAPTVTSVRGTSAHFGIQLRGGTRLPDRLSWPCGPGSAGWQQEFAAMDSSETLDASWEAACSDGARRVRAAGSLPSAELSSNSCSPGCGPEVPPTPPGSHSAFTSSFSFIRLSLGSAGERGEAEGCPPSREAESHCQSPQEMGAKAASLDGPHEDPRCLSRPFSLLATRVSADLAQAARNSSRPERDMHSLPDMDPGSSSSLDPSLAGCGGDGSSGSGDAHSWDTLLRKWEPVLRDCLLRNRRQMEVISLRLKLQKLQEDAVENDDYDKAETLQQRLEDLEQEKISLHFQLPSRQPALSSFLGHLAAQVQAALRRGATQQASGDDTHTPLRMEPRLLEPTAQDSLHVSITRRDWLLQEKQQLQKEIEALQARMFVLEAKDQQLRREIEEQEQQLQWQGCDLTPLVGQLSLGQLQEVSKALQDTLASAGQIPFHAEPPETIRSLQERIKSLNLSLKEITTKVCMSEKFCSTLRKKVNDIETQLPALLEAKMHAISGNHFWTAKDLTEEIRSLTSEREGLEGLLSKLLVLSSRNVKKLGSVKEDYNRLRREVEHQETAYETSVKENTMKYMETLKNKLCSCKCPLLGKVWEADLEACRLLIQSLQLQEARGSLSVEDERQMDDLEGAAPPIPPRLHSEDKRKTPLKVLEEWKTHLIPSLHCAGGEQKEESYILSAELGEKCEDIGKKLLYLEDQLHTAIHSHDEDLIQSLRRELQMVKETLQAMILQLQPAKEAGEREAAASCMTAGVHEAQA.

Positions 1-18 are enriched in gly residues; sequence MPGGGPQGAPAAAGGGGV. Disordered stretches follow at residues 1–24, 179–205, 221–257, and 278–323; these read MPGG…RAGS, SAEL…SHSA, GERG…GPHE, and AQAA…SGDA. Residues 1–292 are interaction with MAP1A; it reads MPGGGPQGAP…NSSRPERDMH (292 aa). Positions 197-203 match the Interaction with FBXW7 motif; the sequence is PTPPGSH. Basic and acidic residues predominate over residues 285–295; that stretch reads SRPERDMHSLP. The segment at 293-696 is interaction with TRAF3IP1; that stretch reads SLPDMDPGSS…LGKVWEADLE (404 aa). The segment covering 296 to 309 has biased composition (low complexity); the sequence is DMDPGSSSSLDPSL. 3 coiled-coil regions span residues 366 to 394, 452 to 505, and 602 to 666; these read ENDD…HFQL, ITRR…CDLT, and WTAK…SVKE. Residue Lys-372 forms a Glycyl lysine isopeptide (Lys-Gly) (interchain with G-Cter in ubiquitin) linkage. A required for localization to punctate cytoplasmic foci region spans residues 440-597; the sequence is LEPTAQDSLH…LLEAKMHAIS (158 aa). Residues 446-854 form a necessary and sufficient for interaction with PCNT and localization at the centrosome region; that stretch reads DSLHVSITRR…MTAGVHEAQA (409 aa). The tract at residues 598–854 is interaction with ATF4 and ATF5; that stretch reads GNHFWTAKDL…MTAGVHEAQA (257 aa). Residues 716–739 are disordered; it reads VEDERQMDDLEGAAPPIPPRLHSE. An interaction with PAFAH1B1 region spans residues 727-854; sequence GAAPPIPPRL…MTAGVHEAQA (128 aa). Positions 802-830 form a coiled coil; that stretch reads SHDEDLIQSLRRELQMVKETLQAMILQLQ. An interaction with NDEL1 region spans residues 802-835; that stretch reads SHDEDLIQSLRRELQMVKETLQAMILQLQPAKEA.

Interacts with NDEL1. Interacts with CCDC88A (via C-terminus); the interaction is direct. Interacts with GSK3B. Interacts with tubulin alpha, ACTN2, ANKHD1, ATF4, ATF5, CEP63, EIF3S3, MAP1A, NDEL1, PAFAH1B1, RANBP9, SPTBN4, SYNE1 and TRAF3IP1. Interaction with microtubules may be mediated in part by TRAF3IP1. Interacts (via C-terminal) with PCNT. Interacts with CHCHD6. Interacts with CCDC141. Interacts with FBXW7, the substrate-recognition component of a SCF (SKP1-CUL1-F-box protein) E3 ubiquitin-protein ligase complex; the interaction targets DISC1 for proteasomal degradation. Interacts with ZNF365. Interacts with ATF4; inhibiting ATF4 transcription factor activity by disrupting ATF4 dimerization and DNA-binding. Interacts with PDE4B (isoform PDE4B5). In terms of processing, ubiquitinated. Ubiquitination with 'Lys-48'-linked polyubiquitin chains leads to its proteasomal degradation. In terms of tissue distribution, ubiquitous. Highly expressed in the dentate gyrus of the hippocampus. Also expressed in the temporal and parahippocampal cortices and cells of the white matter.

It localises to the cytoplasm. Its subcellular location is the cytoskeleton. The protein resides in the mitochondrion. It is found in the microtubule organizing center. The protein localises to the centrosome. It localises to the postsynaptic density. Its function is as follows. Involved in the regulation of multiple aspects of embryonic and adult neurogenesis. Required for neural progenitor proliferation in the ventrical/subventrical zone during embryonic brain development and in the adult dentate gyrus of the hippocampus. Participates in the Wnt-mediated neural progenitor proliferation as a positive regulator by modulating GSK3B activity and CTNNB1 abundance. Plays a role as a modulator of the AKT-mTOR signaling pathway controlling the tempo of the process of newborn neurons integration during adult neurogenesis, including neuron positioning, dendritic development and synapse formation. Inhibits the activation of AKT-mTOR signaling upon interaction with CCDC88A. Regulates the migration of early-born granule cell precursors toward the dentate gyrus during the hippocampal development. Inhibits ATF4 transcription factor activity in neurons by disrupting ATF4 dimerization and DNA-binding. Plays a role, together with PCNT, in the microtubule network formation. This is Disrupted in schizophrenia 1 protein from Homo sapiens (Human).